The following is a 197-amino-acid chain: Nucleoside triphosphate pyrophosphatase (197 aa).

Aspartate 70 acts as the Proton acceptor in catalysis.

It belongs to the Maf family. A divalent metal cation is required as a cofactor.

It is found in the cytoplasm. The enzyme catalyses a ribonucleoside 5'-triphosphate + H2O = a ribonucleoside 5'-phosphate + diphosphate + H(+). It catalyses the reaction a 2'-deoxyribonucleoside 5'-triphosphate + H2O = a 2'-deoxyribonucleoside 5'-phosphate + diphosphate + H(+). In terms of biological role, nucleoside triphosphate pyrophosphatase. May have a dual role in cell division arrest and in preventing the incorporation of modified nucleotides into cellular nucleic acids. The protein is Nucleoside triphosphate pyrophosphatase (yhdE) of Shigella flexneri.